The sequence spans 441 residues: Arginine biosynthesis bifunctional protein ArgJ, mitochondrial (441 aa).

6 residues coordinate substrate: T177, K204, T215, E301, N436, and S441. T215 (nucleophile) is an active-site residue.

The protein belongs to the ArgJ family. As to quaternary structure, heterodimer of an alpha and a beta chain. In terms of processing, the alpha and beta chains are autoproteolytically processed from a single precursor protein within the mitochondrion.

It localises to the mitochondrion matrix. The catalysed reaction is N(2)-acetyl-L-ornithine + L-glutamate = N-acetyl-L-glutamate + L-ornithine. It catalyses the reaction L-glutamate + acetyl-CoA = N-acetyl-L-glutamate + CoA + H(+). The protein operates within amino-acid biosynthesis; L-arginine biosynthesis; L-ornithine and N-acetyl-L-glutamate from L-glutamate and N(2)-acetyl-L-ornithine (cyclic): step 1/1. It participates in amino-acid biosynthesis; L-arginine biosynthesis; N(2)-acetyl-L-ornithine from L-glutamate: step 1/4. Catalyzes two activities which are involved in the cyclic version of arginine biosynthesis: the synthesis of acetylglutamate from glutamate and acetyl-CoA, and of ornithine by transacetylation between acetylornithine and glutamate. This Candida glabrata (strain ATCC 2001 / BCRC 20586 / JCM 3761 / NBRC 0622 / NRRL Y-65 / CBS 138) (Yeast) protein is Arginine biosynthesis bifunctional protein ArgJ, mitochondrial.